A 162-amino-acid chain; its full sequence is N5-carboxyaminoimidazole ribonucleotide mutase (162 aa).

Substrate contacts are provided by serine 11, aspartate 14, and arginine 41.

This sequence belongs to the AIR carboxylase family. Class I subfamily.

It catalyses the reaction 5-carboxyamino-1-(5-phospho-D-ribosyl)imidazole + H(+) = 5-amino-1-(5-phospho-D-ribosyl)imidazole-4-carboxylate. The protein operates within purine metabolism; IMP biosynthesis via de novo pathway; 5-amino-1-(5-phospho-D-ribosyl)imidazole-4-carboxylate from 5-amino-1-(5-phospho-D-ribosyl)imidazole (N5-CAIR route): step 2/2. Its function is as follows. Catalyzes the conversion of N5-carboxyaminoimidazole ribonucleotide (N5-CAIR) to 4-carboxy-5-aminoimidazole ribonucleotide (CAIR). The polypeptide is N5-carboxyaminoimidazole ribonucleotide mutase (Bacillus subtilis (strain 168)).